The chain runs to 985 residues: Lateral signaling target protein 2 homolog (985 aa).

Disordered regions lie at residues 310 to 453 (PLGS…ETDE), 498 to 520 (EYGAGEQQRQRHRDGQEDEPSTS), 533 to 640 (LRLP…SSLS), and 747 to 892 (DNVF…TTTA). 3 stretches are compositionally biased toward low complexity: residues 327 to 348 (HPTTSSNNNNNNGDTTGTTNTH), 384 to 393 (SLSPNSTPTA), and 401 to 422 (PSHSIASTSSSATGSTHPPADW). A compositionally biased stretch (acidic residues) spans 423–453 (SDGDDEDEEDDDDDIEVEEEELDSTDDETDE). Phosphoserine is present on residues serine 537 and serine 538. Basic residues-rich tracts occupy residues 563–589 (VYRHRHSHRHHHRHHHHHHQRHHHHQH) and 596–607 (HPHRTTRSGRKR). Composition is skewed to low complexity over residues 629–640 (ASGDTSAASSLS) and 761–770 (NGNQANASAQ). The span at 776 to 785 (GSIQRNNTVD) shows a compositional bias: polar residues. Position 808 is a phosphoserine (serine 808). Residues 812–866 (QESASTSTSSSQLHQEQQQLQIQVQRQRNNSVGSNTPSSASSTSSSSEQNSPVSA) are compositionally biased toward low complexity. Residues 875-885 (QSNNETQMPSS) are compositionally biased toward polar residues. An FYVE-type zinc finger spans residues 904-964 (DGKAPRCMSC…VCRECYVREV (61 aa)). Zn(2+) is bound by residues cysteine 910, cysteine 913, cysteine 926, cysteine 929, cysteine 934, cysteine 937, cysteine 956, and cysteine 959.

The protein belongs to the lst-2 family.

Functionally, negative regulator of epidermal growth factor receptor (EGFR) signaling. This is Lateral signaling target protein 2 homolog from Drosophila ananassae (Fruit fly).